The chain runs to 351 residues: LETM1 domain-containing protein 1 (351 aa).

Topologically, residues 1 to 130 (MLSGMALCRT…FRRDIIKAAP (130 aa)) are cytoplasmic. The chain crosses the membrane as a helical span at residues 131 to 151 (VVIISIPPFANYLVFVLMYFF). Topologically, residues 152-351 (PRQLLIRHFW…SANYLQSIKQ (200 aa)) are mitochondrial intermembrane. The Letm1 RBD domain occupies 172-351 (IYHRMRVEAY…SANYLQSIKQ (180 aa)).

The protein localises to the mitochondrion outer membrane. It localises to the nucleus. Its subcellular location is the mitochondrion inner membrane. Functionally, may play an essential role for mitochondrial structure and function. This Xenopus tropicalis (Western clawed frog) protein is LETM1 domain-containing protein 1.